The primary structure comprises 148 residues: Large ribosomal subunit protein uL15 (148 aa).

The tract at residues 1-51 (MNLSNLKPAEGSTKTRKRIGRGPGSGLGGTSTRGHKGAKSRSGYKNKIGFE) is disordered. Over residues 21-31 (RGPGSGLGGTS) the composition is skewed to gly residues. Basic residues predominate over residues 33 to 44 (RGHKGAKSRSGY).

This sequence belongs to the universal ribosomal protein uL15 family. As to quaternary structure, part of the 50S ribosomal subunit.

Functionally, binds to the 23S rRNA. This is Large ribosomal subunit protein uL15 from Parabacteroides distasonis (strain ATCC 8503 / DSM 20701 / CIP 104284 / JCM 5825 / NCTC 11152).